The sequence spans 116 residues: Somatostatin (116 aa).

The signal sequence occupies residues 1–24; the sequence is MLSCRLQCALAALSIVLALGCVTG. The propeptide occupies 25 to 88; the sequence is APSDPRLRQF…QDEMRLELQR (64 aa). Position 43 is an alanine amide (Ala43). Residues 62–82 are disordered; it reads QTENDALEPEDLSQAAEQDEM. Cys105 and Cys116 form a disulfide bridge.

It belongs to the somatostatin family. In terms of processing, C-terminal amidation of the neuronostatin peptide is required for its biological activity, including for the regulation of mean arterial pressure.

It localises to the secreted. In terms of biological role, inhibits the secretion of pituitary hormones, including that of growth hormone/somatotropin (GH1), PRL, ACTH, luteinizing hormone (LH) and TSH. Also impairs ghrelin- and GnRH-stimulated secretion of GH1 and LH; the inhibition of ghrelin-stimulated secretion of GH1 can be further increased by neuronostatin. May enhance low-glucose-induced glucagon release by pancreatic alpha cells. This effect may be mediated by binding to GPR107 and PKA activation. May regulate cardiac contractile function. May compromise cardiomyocyte viability. In the central nervous system, may impair memory retention and may affect hippocampal excitability. May also have anxiolytic and anorexigenic effects. May play a role in arterial pressure regulation. May inhibit basal, but not ghrelin- or GnRH-stimulated secretion of GH1 or LH, but does not affect the release of other pituitary hormones, including PRL, ACTH, FSH or TSH. Potentiates inhibitory action of somatostatin on ghrelin-stimulated secretion of GH1, but not that on GnRH-stimulated secretion of LH. This is Somatostatin (SST) from Homo sapiens (Human).